A 292-amino-acid polypeptide reads, in one-letter code: Imipenem-hydrolyzing beta-lactamase (292 aa).

A signal peptide spans 1 to 27 (MSLNVKQSRIAILFSSCLISISFFSQA). Cys70 and Cys240 are oxidised to a cystine. Residue Ser71 is the Acyl-ester intermediate of the active site. 236–238 (KTG) is a binding site for substrate.

This sequence belongs to the class-A beta-lactamase family.

The catalysed reaction is a beta-lactam + H2O = a substituted beta-amino acid. Its function is as follows. Hydrolyzes carbapenems such as imipenem, which are extended-spectrum beta-lactam antibiotics. The polypeptide is Imipenem-hydrolyzing beta-lactamase (nmcA) (Enterobacter cloacae).